Here is a 634-residue protein sequence, read N- to C-terminus: Threonine--tRNA ligase (634 aa).

Residues 1–61 (MINITLPDGS…DHDASLRIIT (61 aa)) enclose the TGS domain. Residues 243–534 (DHRRIGKAQD…LIEHHAGAFP (292 aa)) are catalytic. Zn(2+) is bound by residues cysteine 334, histidine 385, and histidine 511.

It belongs to the class-II aminoacyl-tRNA synthetase family. Homodimer. Zn(2+) is required as a cofactor.

The protein localises to the cytoplasm. It catalyses the reaction tRNA(Thr) + L-threonine + ATP = L-threonyl-tRNA(Thr) + AMP + diphosphate + H(+). Its function is as follows. Catalyzes the attachment of threonine to tRNA(Thr) in a two-step reaction: L-threonine is first activated by ATP to form Thr-AMP and then transferred to the acceptor end of tRNA(Thr). Also edits incorrectly charged L-seryl-tRNA(Thr). This is Threonine--tRNA ligase from Xanthomonas axonopodis pv. citri (strain 306).